The sequence spans 229 residues: Ribose-5-phosphate isomerase A (229 aa).

Substrate-binding positions include 28–31 (TGST), 84–87 (DGAD), and 97–100 (KGGG). Glu106 serves as the catalytic Proton acceptor. Lys124 contacts substrate.

The protein belongs to the ribose 5-phosphate isomerase family. Homodimer.

The enzyme catalyses aldehydo-D-ribose 5-phosphate = D-ribulose 5-phosphate. The protein operates within carbohydrate degradation; pentose phosphate pathway; D-ribose 5-phosphate from D-ribulose 5-phosphate (non-oxidative stage): step 1/1. Catalyzes the reversible conversion of ribose-5-phosphate to ribulose 5-phosphate. In Lacticaseibacillus paracasei (strain ATCC 334 / BCRC 17002 / CCUG 31169 / CIP 107868 / KCTC 3260 / NRRL B-441) (Lactobacillus paracasei), this protein is Ribose-5-phosphate isomerase A.